The primary structure comprises 399 residues: 4-hydroxyphenylpyruvate dioxygenase (399 aa).

2 consecutive VOC domains span residues 23–166 (GYDH…LIER) and 197–355 (RIDH…LFTK). The Fe cation site is built by H200, H283, and E366.

The protein belongs to the 4HPPD family. The cofactor is Fe cation.

The catalysed reaction is 3-(4-hydroxyphenyl)pyruvate + O2 = homogentisate + CO2. It functions in the pathway amino-acid degradation; L-phenylalanine degradation; acetoacetate and fumarate from L-phenylalanine: step 3/6. The sequence is that of 4-hydroxyphenylpyruvate dioxygenase (TCRP) from Coccidioides posadasii (strain C735) (Valley fever fungus).